The following is a 266-amino-acid chain: tRNA pseudouridine synthase A (266 aa).

Asp-57 acts as the Nucleophile in catalysis. A substrate-binding site is contributed by Tyr-115.

It belongs to the tRNA pseudouridine synthase TruA family. Homodimer.

It carries out the reaction uridine(38/39/40) in tRNA = pseudouridine(38/39/40) in tRNA. Formation of pseudouridine at positions 38, 39 and 40 in the anticodon stem and loop of transfer RNAs. This is tRNA pseudouridine synthase A from Buchnera aphidicola subsp. Acyrthosiphon pisum (strain Tuc7).